The chain runs to 385 residues: Transcription factor TGAL3 (385 aa).

Residues 62 to 113 (LHALVGGGDGGDDAGEQRGADSSAVSKERRGDQKMQRRLAQNREAARKSRMR) form a disordered region. Positions 87-96 (SKERRGDQKM) are enriched in basic and acidic residues. In terms of domain architecture, bZIP spans 93–137 (DQKMQRRLAQNREAARKSRMRKKAYIQQLESSRSKLMHLEQELQR). Residues 95 to 115 (KMQRRLAQNREAARKSRMRKK) form a basic motif region. The interval 121–135 (LESSRSKLMHLEQEL) is leucine-zipper. Residues 162–382 (TLAFDLEYAR…RALSSLWLAR (221 aa)) enclose the DOG1 domain.

Belongs to the bZIP family. As to quaternary structure, interacts with NPR1/NH1, NPR2/NH2 and NPR3/NH3.

It localises to the nucleus. In terms of biological role, transcriptional regulator involved in defense response. The chain is Transcription factor TGAL3 from Oryza sativa subsp. japonica (Rice).